The primary structure comprises 491 residues: Spermatogenesis-defective protein 39 homolog (491 aa).

T21 bears the Phosphothreonine mark. Positions 72-81 (KETAGSSGST) are enriched in polar residues. Positions 72 to 101 (KETAGSSGSTPEGREQLKGRNSFYTQLPKP) are disordered. T115 carries the phosphothreonine modification. Phosphoserine occurs at positions 119, 122, and 128. The disordered stretch occupies residues 121 to 141 (QSLSDALSDTPAKSYAPELGR). T130 is modified (phosphothreonine).

Belongs to the SPE39 family. In terms of assembly, interacts with VPS33B. Associates with the homotypic fusion and vacuole protein sorting (HOPS) complex; impaired by VPS33B. Interacts with RAB11A.

Its subcellular location is the cytoplasm. It localises to the cytoplasmic vesicle. It is found in the early endosome. The protein resides in the recycling endosome. The protein localises to the late endosome. Its function is as follows. Proposed to be involved in endosomal maturation implicating in part VPS33B. In epithelial cells, the VPS33B:VIPAS39 complex may play a role in the apical RAB11A-dependent recycling pathway and in the maintenance of the apical-basolateral polarity. May play a role in lysosomal trafficking, probably via association with the core HOPS complex in a discrete population of endosomes; the functions seems to be independent of VPS33B. May play a role in vesicular trafficking during spermatogenesis. May be involved in direct or indirect transcriptional regulation of E-cadherin. This Mus musculus (Mouse) protein is Spermatogenesis-defective protein 39 homolog (Vipas39).